Reading from the N-terminus, the 309-residue chain is MDLQNDIIVRGKSYEMPFSKGILARSLTAAGLKPSIAYRIAWDIYEMLKKENIRVIDKADLRRRVYYYLISKNYDEVAKKYLLWRMVLGRRPIVILIGGASGVGTSTIAFEIASRLGIPSVIGTDSIREVMRKVISRDLIPTLYESSYTAWKVLRDDEGNKYIKGFERHSEAVLTGVEGVIDRCLVEGQSVIIEGTHLVPTLLKDKYLENSHVVFIMLTIYNEELHKMRFYARGRVSSRPTERYLKYFKIIRMINDYMVETAKKKGIPVVENIKISETVDKCLNIITERLKTMIELEGLSEEDMLEEGL.

The 88-residue stretch at 5-92 (NDIIVRGKSY…LWRMVLGRRP (88 aa)) folds into the ATP-cone domain.

The protein belongs to the 2-phosphoglycerate kinase family. It depends on a divalent metal cation as a cofactor.

The catalysed reaction is (2R)-2-phosphoglycerate + ATP = (2R)-2,3-bisphosphoglycerate + ADP + H(+). The protein operates within thermoadapter biosynthesis; cyclic 2,3-diphosphoglycerate biosynthesis; cyclic 2,3-diphosphoglycerate from 2-phospho-D-glycerate: step 1/2. Functionally, catalyzes the phosphorylation of 2-phosphoglycerate to 2,3-diphosphoglycerate. Involved in the biosynthesis of cyclic 2,3-bisphosphoglycerate, a thermoprotectant. The chain is 2-phosphoglycerate kinase from Methanocaldococcus jannaschii (strain ATCC 43067 / DSM 2661 / JAL-1 / JCM 10045 / NBRC 100440) (Methanococcus jannaschii).